We begin with the raw amino-acid sequence, 218 residues long: Akirin (218 aa).

Positions Lys-96–Ala-150 are disordered. The span at Ser-128 to Arg-147 shows a compositional bias: polar residues.

This sequence belongs to the akirin family. Interacts with hda-1, a component of the NuRD complex. Interacts with let-418, a component of the NuRD and MEC complexes. Interacts with the transcription factor ceh-18. Interacts with ima-2. In terms of tissue distribution, localizes to somatic tissues throughout the body, including muscle cells. Expressed in lateral epithelial seam cells, the hyp7 epidermal syncytium, and multiple head and tail neurons.

It is found in the nucleus. Functionally, molecular adapter that acts as a bridge between a variety of multiprotein complexes, and which is involved in antifungal innate immunity, development of the muscle and sister chromatid cohesion. Plays a role in antifungal innate immunity by acting as a bridge between components of the NuRD (Nucleosome Remodeling and Deacetylase) and MEC chromatin remodeling complexes. NuRD and MEC complexes bind to the promoters of antimicrobial peptide genes and may recruit other proteins such as ceh-18 to control gene expression in response to fungal infection. During meiotic prophase I, plays a role in the disassembly of synaptonemal complex proteins and in the regulation of chromosome condensation and segregation. Together with nuclear import receptor ima-2, required for the import and load of cohesin complex proteins in meiotic nuclei, possibly by acting as a bridge between ima-2 and cohesins. Required for embryonic development of muscle tissue. The sequence is that of Akirin from Caenorhabditis elegans.